Here is a 648-residue protein sequence, read N- to C-terminus: Exoribonuclease 2 (648 aa).

An RNB domain is found at 191 to 518; that stretch reads RIDLTYLDFI…INHRLIKSII (328 aa). An S1 motif domain is found at 565–647; it reads KKKYQANIID…GNKKIIATMI (83 aa).

This sequence belongs to the RNR ribonuclease family. RNase II subfamily.

The protein resides in the cytoplasm. The enzyme catalyses Exonucleolytic cleavage in the 3'- to 5'-direction to yield nucleoside 5'-phosphates.. Its function is as follows. Involved in mRNA degradation. Hydrolyzes single-stranded polyribonucleotides processively in the 3' to 5' direction. In Buchnera aphidicola subsp. Cinara cedri (strain Cc), this protein is Exoribonuclease 2.